The primary structure comprises 213 residues: Calcium-dependent cell adhesion molecule 1 (213 aa).

Repeat copies occupy residues 1-48 (MSVD…LVGS), 49-97 (NVRC…GAFQ), 98-146 (WAVD…LTPP), and 147-194 (DSEI…FPKN). The interval 1–194 (MSVDANKVKF…IKKDETFPKN (194 aa)) is 4 X approximate tandem repeats.

The protein belongs to the Dictyostelium CAD family. The N-terminus is blocked.

It is found in the cell membrane. Mediates calcium-dependent cell-cell adhesion during the early stage of development. In Dictyostelium discoideum (Social amoeba), this protein is Calcium-dependent cell adhesion molecule 1 (cadA).